Here is a 139-residue protein sequence, read N- to C-terminus: Phosphoribosyl-AMP cyclohydrolase (139 aa).

A Mg(2+)-binding site is contributed by Asp-91. Cys-92 contacts Zn(2+). Positions 93 and 95 each coordinate Mg(2+). 2 residues coordinate Zn(2+): Cys-110 and Cys-117.

The protein belongs to the PRA-CH family. Homodimer. Mg(2+) serves as cofactor. It depends on Zn(2+) as a cofactor.

The protein localises to the cytoplasm. The enzyme catalyses 1-(5-phospho-beta-D-ribosyl)-5'-AMP + H2O = 1-(5-phospho-beta-D-ribosyl)-5-[(5-phospho-beta-D-ribosylamino)methylideneamino]imidazole-4-carboxamide. Its pathway is amino-acid biosynthesis; L-histidine biosynthesis; L-histidine from 5-phospho-alpha-D-ribose 1-diphosphate: step 3/9. In terms of biological role, catalyzes the hydrolysis of the adenine ring of phosphoribosyl-AMP. This chain is Phosphoribosyl-AMP cyclohydrolase, found in Brucella abortus (strain S19).